Reading from the N-terminus, the 317-residue chain is DNA-directed RNA polymerase subunit alpha 2 (317 aa).

The interval 1–227 (MALENLLHPT…NQLRNIVDIE (227 aa)) is alpha N-terminal domain (alpha-NTD). The tract at residues 241-317 (INPILLKHVE…TLIENWPQDL (77 aa)) is alpha C-terminal domain (alpha-CTD).

It belongs to the RNA polymerase alpha chain family. Homodimer. The RNAP catalytic core consists of 2 alpha, 1 beta, 1 beta' and 1 omega subunit. When a sigma factor is associated with the core the holoenzyme is formed, which can initiate transcription.

The catalysed reaction is RNA(n) + a ribonucleoside 5'-triphosphate = RNA(n+1) + diphosphate. Its function is as follows. DNA-dependent RNA polymerase catalyzes the transcription of DNA into RNA using the four ribonucleoside triphosphates as substrates. The polypeptide is DNA-directed RNA polymerase subunit alpha 2 (Francisella tularensis subsp. holarctica (strain LVS)).